The chain runs to 442 residues: Na(+)/H(+) antiporter NhaA (442 aa).

Helical transmembrane passes span 32–52, 73–93, 111–131, 139–159, 170–190, 193–213, 234–254, 284–304, 316–336, 352–372, and 383–403; these read IGGGLLLAATVLALGWANSPW, LTLAQWAADGLLAIFFFVAGL, AVPVLAACGGVAVPAVLYALV, AGWAIPTATDIAFALAVLAVI, FLLTLAVVDDLLAIVIIAVVY, HLSILPLLGALVPLALFTLLV, VHASGVHATVAGVLLGFAVPV, VAVPIFAFFSAGVTVDGLSGL, VVLGLVVGKPLGIMAATFLVA, VLGLAVLAGIGFTVSLLIGEL, and HVKIAVLTGSLLAALLAAVVL. Over residues 423–435 the composition is skewed to basic and acidic residues; sequence HDGIPDVYQDLHR. The interval 423–442 is disordered; sequence HDGIPDVYQDLHRSSPRPWG.

It belongs to the NhaA Na(+)/H(+) (TC 2.A.33) antiporter family.

The protein resides in the cell membrane. The enzyme catalyses Na(+)(in) + 2 H(+)(out) = Na(+)(out) + 2 H(+)(in). Functionally, na(+)/H(+) antiporter that extrudes sodium in exchange for external protons. The polypeptide is Na(+)/H(+) antiporter NhaA (Frankia casuarinae (strain DSM 45818 / CECT 9043 / HFP020203 / CcI3)).